Reading from the N-terminus, the 790-residue chain is Lysine biosynthesis regulatory protein LYS14 (790 aa).

2 disordered regions span residues 1–50 (MFES…SCFE) and 72–157 (FNHK…YSRN). Residues 35-47 (SGSSFTNSGTSTS) show a composition bias toward low complexity. Polar residues-rich tracts occupy residues 75–113 (KQMT…SEQD) and 120–142 (TISQ…TSTV). The segment at residues 159 to 186 (CSECKRRRMKCDETKPTCWQCARLNRQC) is a DNA-binding region (zn(2)-C6 fungal-type). Residues 195–258 (KKRRTSNAQR…PKPITDNGKN (64 aa)) form a disordered region. Residues 222–239 (ARKRQHSSCKAEKKKKVR) show a composition bias toward basic residues.

Its subcellular location is the nucleus. Activates the transcription of lysine biosynthesis genes. This activation is dependent on the inducer alpha-aminoadipate semialdehyde and repressed by lysine. In Saccharomyces cerevisiae (strain ATCC 204508 / S288c) (Baker's yeast), this protein is Lysine biosynthesis regulatory protein LYS14 (LYS14).